Here is a 270-residue protein sequence, read N- to C-terminus: Chymotrypsin-like elastase family member 3B (270 aa).

Residues Met-1–Ala-15 constitute a signal peptide (or 16). Positions Ser-16–Arg-28 are cleaved as a propeptide — activation peptide. The Peptidase S1 domain occupies Val-29 to Ala-268. An intrachain disulfide couples Cys-58 to Cys-74. Catalysis depends on His-73, which acts as the Charge relay system. Residue Asn-114 is glycosylated (N-linked (GlcNAc...) asparagine). A disulfide bond links Cys-117 and Cys-120. Catalysis depends on Asp-123, which acts as the Charge relay system. Disulfide bonds link Cys-157/Cys-223, Cys-188/Cys-204, and Cys-213/Cys-244. Ser-217 serves as the catalytic Charge relay system.

This sequence belongs to the peptidase S1 family. Elastase subfamily. In terms of tissue distribution, pancreas. Not detectable in keratinocytes.

It catalyses the reaction Preferential cleavage: Ala-|-Xaa. Does not hydrolyze elastin.. In terms of biological role, efficient protease with alanine specificity but only little elastolytic activity. This Homo sapiens (Human) protein is Chymotrypsin-like elastase family member 3B (CELA3B).